A 271-amino-acid chain; its full sequence is Glutamate racemase (271 aa).

Substrate is bound by residues 12-13 (DS) and 44-45 (YG). Cysteine 75 acts as the Proton donor/acceptor in catalysis. 76-77 (NT) contributes to the substrate binding site. Cysteine 185 acts as the Proton donor/acceptor in catalysis. 186–187 (TH) serves as a coordination point for substrate.

This sequence belongs to the aspartate/glutamate racemases family.

The enzyme catalyses L-glutamate = D-glutamate. The protein operates within cell wall biogenesis; peptidoglycan biosynthesis. Functionally, provides the (R)-glutamate required for cell wall biosynthesis. This Methylococcus capsulatus (strain ATCC 33009 / NCIMB 11132 / Bath) protein is Glutamate racemase.